A 145-amino-acid polypeptide reads, in one-letter code: Protein AggB (145 aa).

The signal sequence occupies residues 1–24; it reads MLKKSILPMSCGVLVMVMSGLLDA.

To E.coli AfaD.

This Escherichia coli protein is Protein AggB (aggB).